Reading from the N-terminus, the 308-residue chain is MRKLVVGSRRSKLALTQSRQFIERLKKVEPDLDIEIKEIVTKGDRIVDKQLSKVGGKGLFVKEIQQELFDHEIDMAIHSLKDVPSELPDGLTLGCIPDREIPLDAFISKNHVQLADLPDGSIVGTSSLRRGAQILAKYPNLEIKWIRGNIDTRLSKLETEDYDAIILAAAGLRRMGWSDDIVTEYLDPELLVPAIGQGALGIECRSDDTELLDLLSKVHNQEVAECVTAERTFLKEMNGSCQVPIGGYATIDDNGRLTFTGLIMSPDGKQRFEQTATGNDPVELGKEVSDILKEQGAKEIIDALNEES.

Cys241 is subject to S-(dipyrrolylmethanemethyl)cysteine.

It belongs to the HMBS family. As to quaternary structure, monomer. It depends on dipyrromethane as a cofactor.

The catalysed reaction is 4 porphobilinogen + H2O = hydroxymethylbilane + 4 NH4(+). It participates in porphyrin-containing compound metabolism; protoporphyrin-IX biosynthesis; coproporphyrinogen-III from 5-aminolevulinate: step 2/4. In terms of biological role, tetrapolymerization of the monopyrrole PBG into the hydroxymethylbilane pre-uroporphyrinogen in several discrete steps. This Staphylococcus carnosus (strain TM300) protein is Porphobilinogen deaminase.